Here is a 213-residue protein sequence, read N- to C-terminus: MGNRTDEDYNFVFKVVLIGESGVGKTNLLSRFTRNEFSHDSRTTIGVEFSTRTVMLGTAAVKAQIWDTAGLERYRAITSAYYRGAVGALLVFDLTKHQTYAVVERWLKELYDHAEATIVVMLVGNKSDLSQAREVPTEEACMFAENNGLLFLETSALDSTNVELAFQTVLKEIFAKVSKQKQNSTRTSAITLGNAQAGQDPGPGEKRACCISL.

S21, G24, K25, T26, N27, S38, H39, T43, and T44 together coordinate GTP. Position 26 (T26) interacts with Mg(2+). 2 short sequence motifs (switch) span residues 35–49 (NEFS…GVEF) and 67–84 (DTAG…YYRG). Mg(2+) contacts are provided by T44 and D67. Residues G70, N125, K126, D128, A156, and L157 each contribute to the GTP site. 2 S-geranylgeranyl cysteine lipidation sites follow: C209 and C210. Residue C210 is modified to Cysteine methyl ester. Residues 211–213 (ISL) constitute a propeptide, removed in mature form.

It belongs to the small GTPase superfamily. Rab family. Interacts (GTP-bound form) with RAB11FIP1, RAB11FIP2, RAB11FIP3 and RAB11FIP4. Interacts (via the hypervariable C-terminal region) with ITGB1 (via the cytoplasmic region); the interaction is GTP-dependent. Interacts with ITGAV. Associates with the integrin alpha-V/beta-1 heterodimer. Interacts with VPS33B. It depends on Mg(2+) as a cofactor.

The protein localises to the cell membrane. The protein resides in the cell projection. Its subcellular location is the pseudopodium membrane. It is found in the cytoplasmic vesicle. The catalysed reaction is GTP + H2O = GDP + phosphate + H(+). With respect to regulation, regulated by guanine nucleotide exchange factors (GEFs) which promote the exchange of bound GDP for free GTP. Regulated by GTPase activating proteins (GAPs) which increase the GTP hydrolysis activity. Inhibited by GDP dissociation inhibitors (GDIs) which prevent Rab-GDP dissociation. The small GTPases Rab are key regulators of intracellular membrane trafficking, from the formation of transport vesicles to their fusion with membranes. Rabs cycle between an inactive GDP-bound form and an active GTP-bound form that is able to recruit to membranes different set of downstream effectors directly responsible for vesicle formation, movement, tethering and fusion. RAB25 regulates epithelial cell differentiation, proliferation and survival, thereby playing key roles in tumorigenesis. Promotes invasive migration of cells in which it functions to localize and maintain integrin alpha-V/beta-1 at the tips of extending pseudopodia. Involved in the regulation of epithelial morphogenesis through the control of CLDN4 expression and localization at tight junctions. May selectively regulate the apical recycling pathway. Together with MYO5B regulates transcytosis. This Mus musculus (Mouse) protein is Ras-related protein Rab-25.